The primary structure comprises 412 residues: tRNA N6-adenosine threonylcarbamoyltransferase, mitochondrial (412 aa).

A mitochondrion-targeting transit peptide spans 1-78 (MLCLVYNSIL…IICLNTHRTI (78 aa)). 2 residues coordinate a divalent metal cation: His157 and His161. Substrate contacts are provided by residues 179 to 183 (LVSGG), Asp212, Ala228, Glu232, 328 to 329 (RN), and Ser363. Position 364 (Asp364) interacts with a divalent metal cation.

This sequence belongs to the KAE1 / TsaD family. Homodimer. A divalent metal cation serves as cofactor.

The protein resides in the mitochondrion. The enzyme catalyses L-threonylcarbamoyladenylate + adenosine(37) in tRNA = N(6)-L-threonylcarbamoyladenosine(37) in tRNA + AMP + H(+). Required for the formation of a threonylcarbamoyl group on adenosine at position 37 (t(6)A37) in mitochondrial tRNAs that read codons beginning with adenine. Probably involved in the transfer of the threonylcarbamoyl moiety of threonylcarbamoyl-AMP (TC-AMP) to the N6 group of A37. Involved in mitochondrial genome maintenance. This is tRNA N6-adenosine threonylcarbamoyltransferase, mitochondrial (pgp1) from Schizosaccharomyces pombe (strain 972 / ATCC 24843) (Fission yeast).